The following is a 120-amino-acid chain: Large ribosomal subunit protein uL22 (120 aa).

It belongs to the universal ribosomal protein uL22 family. As to quaternary structure, part of the 50S ribosomal subunit.

Functionally, this protein binds specifically to 23S rRNA; its binding is stimulated by other ribosomal proteins, e.g. L4, L17, and L20. It is important during the early stages of 50S assembly. It makes multiple contacts with different domains of the 23S rRNA in the assembled 50S subunit and ribosome. In terms of biological role, the globular domain of the protein is located near the polypeptide exit tunnel on the outside of the subunit, while an extended beta-hairpin is found that lines the wall of the exit tunnel in the center of the 70S ribosome. This Acaryochloris marina (strain MBIC 11017) protein is Large ribosomal subunit protein uL22.